The following is a 132-amino-acid chain: Small ribosomal subunit protein uS11 (132 aa).

It belongs to the universal ribosomal protein uS11 family. As to quaternary structure, part of the 30S ribosomal subunit. Interacts with proteins S7 and S18. Binds to IF-3.

Its function is as follows. Located on the platform of the 30S subunit, it bridges several disparate RNA helices of the 16S rRNA. Forms part of the Shine-Dalgarno cleft in the 70S ribosome. This Clostridium kluyveri (strain NBRC 12016) protein is Small ribosomal subunit protein uS11.